A 405-amino-acid chain; its full sequence is Serine/threonine transporter SstT (405 aa).

Transmembrane regions (helical) follow at residues 13–33 (GGSLVLQIFVGIIAGVALAGF), 43–63 (FLGDLFVGALKAIAPVLVFVL), 82–102 (IILLYLVGTFAAALTAVLMSF), 141–161 (ALINANYIGLLAWGVGLGIAL), 185–205 (FVICLAPIGIFGLVAATIAQT), 217–237 (LGVLLGAMAVIAFVVNPLIVF), 298–318 (MAGAAITITVLTLAAVHTLGI), and 339–359 (ASGVAGGSLLLIPLACSLFGI).

The protein belongs to the dicarboxylate/amino acid:cation symporter (DAACS) (TC 2.A.23) family.

The protein localises to the cell inner membrane. It carries out the reaction L-serine(in) + Na(+)(in) = L-serine(out) + Na(+)(out). It catalyses the reaction L-threonine(in) + Na(+)(in) = L-threonine(out) + Na(+)(out). Its function is as follows. Involved in the import of serine and threonine into the cell, with the concomitant import of sodium (symport system). The chain is Serine/threonine transporter SstT from Shewanella amazonensis (strain ATCC BAA-1098 / SB2B).